The primary structure comprises 490 residues: N-succinylglutamate 5-semialdehyde dehydrogenase (490 aa).

223 to 228 (GSSRTG) lines the NAD(+) pocket. Residues Glu-246 and Cys-280 contribute to the active site.

Belongs to the aldehyde dehydrogenase family. AstD subfamily.

The enzyme catalyses N-succinyl-L-glutamate 5-semialdehyde + NAD(+) + H2O = N-succinyl-L-glutamate + NADH + 2 H(+). It functions in the pathway amino-acid degradation; L-arginine degradation via AST pathway; L-glutamate and succinate from L-arginine: step 4/5. Its function is as follows. Catalyzes the NAD-dependent reduction of succinylglutamate semialdehyde into succinylglutamate. The sequence is that of N-succinylglutamate 5-semialdehyde dehydrogenase from Pseudoalteromonas atlantica (strain T6c / ATCC BAA-1087).